We begin with the raw amino-acid sequence, 728 residues long: MAMRDLVNGGAACAVPGSSSSSNPLGALTNALLGSSSKTQERLKEIPNANRSGPRPQFYSEDQQIRSLPGSELDQPLLQPGAQGSEFFRGFRSVDQNGLGAAWDEVQQGGPMPPMGPMFEPVQPTFEGPPQRVLSNFLHSFVESSRGGIPFRPAPVPVLGLSQSDKQCIRDRSSIMARHFFADRGEEFINSQVNALLSSLDIDDGIQARGHVPGRFRELDDYWNESQAVVKPNLHPADNWAAEFNQHGMDHGGPDSWVQSFEQQHGVNGWATEFEQGQSQLMSSQMRSMDMQNIAAMEQTRKLAHTLSQDGNPKFQNSRFLQFVSKMSRGELIIDENQVKQASAPGEWATEYEQQYLGPPSWADQFANEKLSHGPEQWADEFASGRGQQETAEDQWVNEFSKLNVDDWIDEFAEGPVGDSSADAWANAYDEFLNEKNAGKQTSGVYVFSDMNPYVGHPEPMKEGQELFRKGLLSEAALALEAEVMKNPENAEGWRLLGVTHAENDDDQQAIAAMMRAQEADPTNLEVLLALGVSHTNELEQATALKYLYGWLRNHPKYGAIAPPELADSLYHADIARLFNEASQLNPEDADVHIVLGVLYNLSREFDRAITSFQTALQLKPNDYSLWNKLGATQANSVQSADAISAYQQALDLKPNYVRAWANMGISYANQGMYKESIPYYVRALAMNPKADNAWQYLRLSLSCASRQDMIEACESRNLDLLQKEFPL.

The interval 1–58 (MAMRDLVNGGAACAVPGSSSSSNPLGALTNALLGSSSKTQERLKEIPNANRSGPRPQF) is disordered. Positions 11–97 (AACAVPGSSS…FRGFRSVDQN (87 aa)) are amphipathic helix 1 (AH1). Residue C13 forms a Glycyl cysteine thioester (Cys-Gly) (interchain with G-Cter in ubiquitin) linkage. A run of 3 repeats spans residues 240 to 244 (WAAEF), 257 to 261 (WVQSF), and 270 to 274 (WATEF). 3 short sequence motifs (wxxxF/Y motif) span residues 240–244 (WAAEF), 257–261 (WVQSF), and 270–274 (WATEF). The interval 288–311 (SMDMQNIAAMEQTRKLAHTLSQDG) is amphipathic helix 3 (AH3). 6 repeat units span residues 348 to 352 (WATEY), 362 to 366 (WADQF), 378 to 382 (WADEF), 396 to 400 (WVNEF), 408 to 412 (WIDEF), and 425 to 429 (WANAY). Short sequence motifs (wxxxF/Y motif) lie at residues 348 to 352 (WATEY), 362 to 366 (WADQF), 378 to 382 (WADEF), 396 to 400 (WVNEF), 408 to 412 (WIDEF), and 425 to 429 (WANAY). Residues 392 to 417 (AEDQWVNEFSKLNVDDWIDEFAEGPV) form an amphipathic helix 4 (AH4) region. 4 TPR repeats span residues 491–524 (AEGWRLLGVTHAENDDDQQAIAAMMRAQEADPTN), 590–623 (ADVHIVLGVLYNLSREFDRAITSFQTALQLKPND), 625–657 (SLWNKLGATQANSVQSADAISAYQQALDLKPNY), and 658–691 (VRAWANMGISYANQGMYKESIPYYVRALAMNPKA).

It belongs to the peroxisomal targeting signal receptor family. As to quaternary structure, interacts (via WxxxF/Y and LVxEF motifs) with PEX14; promoting translocation through the PEX13-PEX14 docking complex. Interacts with PEX7, promoting peroxisomal import of proteins containing a C-terminal PTS2-type peroxisomal targeting signal. Interacts with LACS7. Post-translationally, monoubiquitinated at Cys-13 by PEX2 during PEX5 passage through the retrotranslocation channel. Cys-13 monoubiquitination acts as a recognition signal for the PEX1-PEX6 complex and is required for PEX5 extraction and export from peroxisomes. When PEX5 recycling is compromised, polyubiquitinated by PEX10 during its passage through the retrotranslocation channel, leading to its degradation. As to expression, expressed in flowers, siliques, leaves and roots.

It localises to the cytoplasm. The protein resides in the cytosol. Its subcellular location is the peroxisome matrix. Functionally, receptor that mediates peroxisomal import of proteins containing a C-terminal PTS1-type tripeptide peroxisomal targeting signal (SKL-type). Binds to cargo proteins containing a PTS1 peroxisomal targeting signal in the cytosol, and translocates them into the peroxisome matrix by passing through the PEX13-PEX14 docking complex along with cargo proteins. PEX5 receptor is then retrotranslocated into the cytosol, leading to release of bound cargo in the peroxisome matrix, and reset for a subsequent peroxisome import cycle. In addition to promoting peroxisomal translocation of proteins containing a PTS1 peroxisomal targeting signal, mediates peroxisomal import of proteins containing a C-terminal PTS2-type peroxisomal targeting signal via its interaction with PEX7. Interaction with PEX7 only takes place when PEX7 is associated with cargo proteins containing a PTS2 peroxisomal targeting signal. PEX7 along with PTS2-containing cargo proteins are then translocated through the PEX13-PEX14 docking complex together with PEX5. Necessary for the developmental elimination of obsolete peroxisome matrix proteins. The chain is Peroxisome biogenesis protein 5 (PEX5) from Arabidopsis thaliana (Mouse-ear cress).